The primary structure comprises 310 residues: Ribosomal RNA large subunit methyltransferase F (310 aa).

The protein belongs to the methyltransferase superfamily. METTL16/RlmF family.

It localises to the cytoplasm. The enzyme catalyses adenosine(1618) in 23S rRNA + S-adenosyl-L-methionine = N(6)-methyladenosine(1618) in 23S rRNA + S-adenosyl-L-homocysteine + H(+). Functionally, specifically methylates the adenine in position 1618 of 23S rRNA. This is Ribosomal RNA large subunit methyltransferase F from Psychromonas ingrahamii (strain DSM 17664 / CCUG 51855 / 37).